The primary structure comprises 311 residues: Cbb3-type cytochrome c oxidase subunit CcoP1 (311 aa).

Transmembrane regions (helical) follow at residues phenylalanine 4–isoleucine 24 and arginine 56–tyrosine 76. Cytochrome c domains are found at residues glutamine 130–leucine 209 and alanine 220–serine 302. Heme c contacts are provided by cysteine 143, cysteine 146, histidine 147, methionine 186, cysteine 233, cysteine 236, histidine 237, and methionine 279.

Belongs to the CcoP / FixP family. In terms of assembly, component of the cbb3-type cytochrome c oxidase at least composed of CcoN, CcoO, CcoQ and CcoP. Heme c is required as a cofactor.

The protein localises to the cell inner membrane. The protein operates within energy metabolism; oxidative phosphorylation. Its function is as follows. C-type cytochrome. Part of the cbb3-type cytochrome c oxidase complex. CcoP subunit is required for transferring electrons from donor cytochrome c via its heme groups to CcoO subunit. From there, electrons are shuttled to the catalytic binuclear center of CcoN subunit where oxygen reduction takes place. The complex also functions as a proton pump. In Stutzerimonas stutzeri (Pseudomonas stutzeri), this protein is Cbb3-type cytochrome c oxidase subunit CcoP1.